A 73-amino-acid polypeptide reads, in one-letter code: Antitoxin VapB2 (73 aa).

As to quaternary structure, forms a homodimer, which binds to a toxin homodimer, which then oligomerizes further to a hetero-octamer. When bound to toxin VapC2 the toxin activity is inhibited; 1 antitoxin may suffice to inhibit toxin.

Functionally, antitoxin component of a type II toxin-antitoxin (TA) system. Upon expression in M.smegmatis neutralizes the effect of cognate toxin VapC2. The C-terminal helix of the antitoxin may obstruct the toxin's RNA-binding groove, blocking access to the active sites. Additionally, the C-terminal arginine of the antitoxin may remove Mg(2+) ions from the toxin active sites. The polypeptide is Antitoxin VapB2 (vapB2) (Mycobacterium tuberculosis (strain ATCC 25618 / H37Rv)).